The primary structure comprises 306 residues: Mycothiol acetyltransferase (306 aa).

2 N-acetyltransferase domains span residues 5–162 (VWAE…TFVP) and 155–306 (VRLR…AQGS). Acetyl-CoA-binding positions include 82 to 84 (LIV) and 90 to 95 (RRGHGT). E182, K222, and E238 together coordinate 1D-myo-inositol 2-(L-cysteinylamino)-2-deoxy-alpha-D-glucopyranoside. Acetyl-CoA-binding positions include 242-244 (VGV) and 249-255 (QGGGLGK). 1D-myo-inositol 2-(L-cysteinylamino)-2-deoxy-alpha-D-glucopyranoside is bound at residue Y276.

The protein belongs to the acetyltransferase family. MshD subfamily. In terms of assembly, monomer.

It carries out the reaction 1D-myo-inositol 2-(L-cysteinylamino)-2-deoxy-alpha-D-glucopyranoside + acetyl-CoA = mycothiol + CoA + H(+). Its function is as follows. Catalyzes the transfer of acetyl from acetyl-CoA to desacetylmycothiol (Cys-GlcN-Ins) to form mycothiol. This chain is Mycothiol acetyltransferase, found in Saccharomonospora viridis (strain ATCC 15386 / DSM 43017 / JCM 3036 / CCUG 5913 / NBRC 12207 / NCIMB 9602 / P101) (Thermoactinomyces viridis).